A 449-amino-acid chain; its full sequence is Chlorobenzene dioxygenase subunit alpha (449 aa).

The Rieske domain maps to 54-163; sequence WLLLGHETQI…VATYKGLIFA (110 aa). Residues Cys96, His98, Cys116, and His119 each contribute to the [2Fe-2S] cluster site. 3 residues coordinate Fe cation: His222, His228, and Asp376.

The protein belongs to the bacterial ring-hydroxylating dioxygenase alpha subunit family. As to quaternary structure, this dioxygenase system consists of four proteins: the two subunits of the oxygenase component (TecA1 and TecA2), a ferredoxin (TecA3) and a ferredoxin reductase (TecA4). [2Fe-2S] cluster serves as cofactor. Requires Fe cation as cofactor.

The catalysed reaction is chlorobenzene + NADH + O2 + H(+) = (1R,2R)-3-chlorocyclohexa-3,5-diene-1,2-diol + NAD(+). It functions in the pathway aromatic compound metabolism. In terms of biological role, part of the oxygenase component of the chlorobenzene dioxygenase system that catalyzes the dihydroxylation of a range of aromatic compounds, including chlorinated benzenes and toluenes, and dinuclear aromatics such as biphenyl and dibenzo-p-dioxin. The alpha subunit is responsible for substrate specificity. The chain is Chlorobenzene dioxygenase subunit alpha from Cupriavidus sp. (strain PS12).